The following is a 314-amino-acid chain: Citrate/oxoglutarate carrier protein (314 aa).

Solcar repeat units lie at residues 18–100 (VSFS…EAEY), 107–199 (LNNF…VEDG), and 217–301 (EKIG…AKEF). 5 consecutive transmembrane segments (helical) span residues 23–44 (ILLG…LEVV), 77–97 (IPWA…VSAE), 111–127 (ASGI…QAYL), 178–198 (VAIR…LVED), and 218–238 (KIGA…IEVI). The DNA-binding element occupies 246–259 (KEDPNRPKNLTVGK). A helical membrane pass occupies residues 273–294 (LYRGVTPRIGLGIWQTVFMVGF).

This sequence belongs to the mitochondrial carrier (TC 2.A.29) family.

It localises to the mitochondrion inner membrane. The protein localises to the mitochondrion matrix. Its subcellular location is the mitochondrion nucleoid. Strongly inhibited by mersalyl, p-chloromercuribenzenesulfonate, mercuric chloride, N-ethylmaleimide, pyridoxal 5'-phosphate, bathophenanthroline, and tannic acid. Partially inhibited by alpha-cyanocinnamate and bromescol purple. Weakly inhibited by butylmalonate and phenylsuccinate. Not inhibited by 1,2,3-benzenetricarboxylate or carboxyatractyloside. Functionally, mitochondrial antiporter which catalyzes the transport of citrate and oxoglutarate across the membrane. Also shows specificity for oxaloacetate, and to a lesser extent succinate and fumarate. Transports isocitrate, cis-aconitate and L-malate with very low efficiency. Does not show uniporter activity. Helps to maintain normal citrate levels and NADPH/NADP(+) ratios under conditions of oxidative stress. In addition, associates with the mitochondrial nucleoid and binds DNA in vitro, although the relevance of these data in vivo is unclear. This is Citrate/oxoglutarate carrier protein (YHM2) from Saccharomyces cerevisiae (strain ATCC 204508 / S288c) (Baker's yeast).